We begin with the raw amino-acid sequence, 433 residues long: 26S proteasome regulatory subunit 7 (433 aa).

Residues 1–22 (MPDYLGADQRKTKEDEKDDKPI) are disordered. Positions 8-22 (DQRKTKEDEKDDKPI) are enriched in basic and acidic residues. Lys-116 is modified (N6-acetyllysine). Residue 216 to 223 (GPPGTGKT) coordinates ATP. An N6-acetyllysine modification is found at Lys-422.

This sequence belongs to the AAA ATPase family. Component of the 19S proteasome regulatory particle complex. The 26S proteasome consists of a 20S core particle (CP) and two 19S regulatory subunits (RP). The regulatory particle is made of a lid composed of 9 subunits, a base containing 6 ATPases including PSMC2 and few additional components. Interacts with NDC80/HEC; this interaction is detected only during M phase. Interacts and SQSTM1. Interacts with PAAF1. Directly interacts with TRIM5. In terms of processing, monoubiquitinated by RNF181. Phosphorylated. Dephosphorylated by UBLCP1 which impairs PSMC2 ATPase activity and disrupts 26S proteasome assembly.

The protein localises to the cytoplasm. The protein resides in the nucleus. Component of the 26S proteasome, a multiprotein complex involved in the ATP-dependent degradation of ubiquitinated proteins. This complex plays a key role in the maintenance of protein homeostasis by removing misfolded or damaged proteins, which could impair cellular functions, and by removing proteins whose functions are no longer required. Therefore, the proteasome participates in numerous cellular processes, including cell cycle progression, apoptosis, or DNA damage repair. PSMC2 belongs to the heterohexameric ring of AAA (ATPases associated with diverse cellular activities) proteins that unfolds ubiquitinated target proteins that are concurrently translocated into a proteolytic chamber and degraded into peptides. The protein is 26S proteasome regulatory subunit 7 (PSMC2) of Pongo abelii (Sumatran orangutan).